The following is a 405-amino-acid chain: Cysteine desulfurase IscS (405 aa).

Residues 75–76 (AT), asparagine 155, glutamine 183, and 203–205 (SGH) each bind pyridoxal 5'-phosphate. At lysine 206 the chain carries N6-(pyridoxal phosphate)lysine. Position 243 (threonine 243) interacts with pyridoxal 5'-phosphate. Residue cysteine 329 is the Cysteine persulfide intermediate of the active site. Cysteine 329 is a [2Fe-2S] cluster binding site.

This sequence belongs to the class-V pyridoxal-phosphate-dependent aminotransferase family. NifS/IscS subfamily. In terms of assembly, homodimer. Forms a heterotetramer with IscU, interacts with other sulfur acceptors. Requires pyridoxal 5'-phosphate as cofactor.

The protein localises to the cytoplasm. The catalysed reaction is (sulfur carrier)-H + L-cysteine = (sulfur carrier)-SH + L-alanine. It participates in cofactor biosynthesis; iron-sulfur cluster biosynthesis. Functionally, master enzyme that delivers sulfur to a number of partners involved in Fe-S cluster assembly, tRNA modification or cofactor biosynthesis. Catalyzes the removal of elemental sulfur atoms from cysteine to produce alanine. Functions as a sulfur delivery protein for Fe-S cluster synthesis onto IscU, an Fe-S scaffold assembly protein, as well as other S acceptor proteins. The protein is Cysteine desulfurase IscS of Pseudoalteromonas translucida (strain TAC 125).